Here is a 702-residue protein sequence, read N- to C-terminus: SAGA complex subunit NGG1 (702 aa).

Residues 1–10 (MPRHGRRGKL) show a composition bias toward basic residues. 2 disordered regions span residues 1 to 29 (MPRH…PSKL) and 90 to 224 (LRKI…VKNP). 2 stretches are compositionally biased toward basic and acidic residues: residues 11 to 22 (PKGEKLPKKEGG) and 90 to 108 (LRKI…EKQE). Polar residues predominate over residues 109-125 (TSNADGQHESSTATEET). At Ser-134 the chain carries Phosphoserine. The span at 162 to 219 (MAKEEINEDKDLQVHRDQPREKRPFDSETENRATENENTQRPDNKKQKIDVDKMENDP) shows a compositional bias: basic and acidic residues. At Ser-407 the chain carries Phosphoserine. Thr-464 carries the phosphothreonine modification. A Nuclear localization signal motif is present at residues 606 to 618 (KRIRVPKKRKKHH). 2 disordered regions span residues 611–636 (PKKR…IAQQ) and 672–702 (NESV…VELN). Polar residues predominate over residues 620–636 (AASNNVNTGTTSQIAQQ). The span at 680–689 (DQEEDEDEAD) shows a compositional bias: acidic residues.

It belongs to the NGG1 family. As to quaternary structure, component of the 1.8 MDa SAGA (Spt-Ada-Gcn5 acetyltransferase) complex, which is composed of 19 subunits TRA1, SPT7, TAF5, NGG1/ADA3, SGF73, SPT20/ADA5, SPT8, TAF12, TAF6, HFI1/ADA1, UBP8, GCN5, ADA2, SPT3, SGF29, TAF10, TAF9, SGF11 and SUS1. The SAGA complex is composed of 4 modules, namely the HAT (histone acetyltransferase) module (GCN5, ADA2, NGG1/ADA3 and SGF29), the DUB (deubiquitinating) module (UBP8, SGF11, SGF73 and SUS1), the core or TAF (TBP-associated factor) module (TAF5, TAF6, TAF9, TAF10 and TAF12), and the Tra1 or SPT (Suppressor of Ty) module (TRA1, HFI1/ADA1, SPT3, SPT7, SPT8 and SPT20/ADA5). The Tra1/SPT module binds activators, the core module recruits TBP (TATA-binding protein), the HAT module contains the histone H3 acetyltransferase GCN5, and the DUB module comprises the histone H2B deubiquitinase UBP8. Also identified in an altered form of SAGA, named SALSA (SAGA altered, Spt8 absent) or SLIK (SAGA-like) complex, which contains a C-terminal truncated form of SPT7 and is missing SPT8. However, it has been shown that the SAGA and SAGA-like SALSA/SLIK transcriptional coactivators are structurally and biochemically equivalent. Component of the 0.8 MDa ADA complex, a HAT complex distinct from SAGA, which at least consists of ADA2, NGG1/ADA3, AHC1, AHC2, SGF29 and GCN5. Identified in an Ada.spt complex with SPT7 and TRA1. Component of an ADA/GCN5 complex that consists of HFI1/ADA1, ADA2, NGG1/ADA3, SPT20/ADA5 and GCN5 and probably is a subcomplex of SAGA.

The protein resides in the nucleus. Component of the transcription coactivator SAGA complex. SAGA acts as a general cofactor required for essentially all RNA polymerase II transcription. At the promoters, SAGA is required for transcription pre-initiation complex (PIC) recruitment. It influences RNA polymerase II transcriptional activity through different activities such as TBP interaction (via core/TAF module) and promoter selectivity, interaction with transcription activators (via Tra1/SPT module), and chromatin modification through histone acetylation (via HAT module) and deubiquitination (via DUB module). SAGA preferentially acetylates histones H3 (to form H3K9ac, H3K14ac, H3K18ac and H3K23ac) and H2B and deubiquitinates histone H2B. SAGA interacts with DNA via upstream activating sequences (UASs). Also identified in a modified version of SAGA named SALSA or SLIK. The cleavage of SPT7 and the absence of the SPT8 subunit in SLIK neither drive any major conformational differences in its structure compared with SAGA, nor significantly affect HAT, DUB, or DNA-binding activities. Component of the ADA histone acetyltransferase complex, which preferentially acetylates nucleosomal histones H3 (to form H3K14ac and H3K18ac) and H2B. May be involved in response to DNA damage by genotoxic agents. In Saccharomyces cerevisiae (strain ATCC 204508 / S288c) (Baker's yeast), this protein is SAGA complex subunit NGG1 (NGG1).